A 550-amino-acid chain; its full sequence is MSGPMQRSSQPQFISSVERNNQSNGPGTPLIDSIDVDQIVIPEKNSWKNLFSYIGPGFLVSIAYIDPGNFETDLQAGAQYKYELLWIILIASCAALIIQSLAARLGVVTGKHLAEHCRAEYPKATNFILWILAELAVVACDIPEVIGTAFALNMLFKIPVWCGVLITGLSTLMLLLLQQYGVRKLEFLIAILVSLIATCFLVELGYSKPNSSEVVRGLFVPELKGNGATGLAISLLGAMVMPHNLFLHSALVLSRKVPRSVHGIKEACRFYMIESAFALTIAFLINISIISVSGAVCGSDNLSPEDQMNCSDLDLNKASFLLKNVLGNWSSKLFAVALLASGQSSTITGTYAGQYVMQGFLDLRMTPWIRNLLTRSLAILPSLIVSIIGGSSAAGQLIIIASMILSFELPFALVPLLKFTSSRTKMGQHTNSKAISVITWGIGSFIVVINTYFLITSFVKLLLHNGLSTVSQVFSGIFGFLGMLIYMAAILYLVFRKNRKATLPLLEGDSTVRIVGRDTATEGEGSLGHLPREDISSMQLPQQRTASDLD.

Polar residues predominate over residues 1–26; sequence MSGPMQRSSQPQFISSVERNNQSNGP. The interval 1-30 is disordered; the sequence is MSGPMQRSSQPQFISSVERNNQSNGPGTPL. Helical transmembrane passes span 50-70, 83-103, 127-147, 158-178, 185-205, 233-253, 276-296, 333-353, 368-390, 397-417, 435-455, and 473-493; these read LFSY…PGNF, ELLW…SLAA, FILW…EVIG, IPVW…LLLQ, LEFL…VELG, ISLL…ALVL, AFAL…SGAV, LFAV…TYAG, WIRN…IIGG, LIII…VPLL, ISVI…YFLI, and VFSG…ILYL. A disordered region spans residues 523-550; the sequence is GEGSLGHLPREDISSMQLPQQRTASDLD. Positions 536–550 are enriched in polar residues; sequence SSMQLPQQRTASDLD.

Belongs to the NRAMP (TC 2.A.55) family.

It localises to the membrane. Its function is as follows. Probable metal transporter. The polypeptide is Metal transporter Nramp3 (NRAMP3) (Oryza sativa subsp. japonica (Rice)).